Reading from the N-terminus, the 390-residue chain is Serpin B3 (390 aa).

An N-acetylmethionine modification is found at Met-1.

This sequence belongs to the serpin family. Ov-serpin subfamily. Interacts with MAPK8/JNK1. As to expression, squamous cells. Expressed in some hepatocellular carcinoma (at protein level).

It is found in the cytoplasm. In terms of biological role, may act as a papain-like cysteine protease inhibitor to modulate the host immune response against tumor cells. Also functions as an inhibitor of UV-induced apoptosis via suppression of the activity of c-Jun NH(2)-terminal kinase (JNK1). This Homo sapiens (Human) protein is Serpin B3 (SERPINB3).